A 1569-amino-acid chain; its full sequence is Zinc finger protein GLI3 (1569 aa).

Composition is skewed to polar residues over residues 1 to 10 (MEAQSRSTTA) and 416 to 432 (AAQQNKPTSESAVSSTG). Disordered stretches follow at residues 1–79 (MEAQ…STSS) and 414–461 (SEAA…DQPD). 5 consecutive C2H2-type zinc fingers follow at residues 485–510 (TNCHWEGCSREFDTQEQLVHHINNDH), 518–545 (FVCRWLDCSREQKPFKAQYMLVVHMRRH), 551–575 (HKCTFEGCSKAYSRLENLKTHLRSH), 581–606 (YVCEHEGCNKAFSNASDRAKHQNRTH), and 612–637 (YVCKIPGCTKRYTDPSSLRKHVKTVH). Disordered regions lie at residues 625–731 (DPSS…YTNS), 899–921 (SYDPISTDASRRSSETSQCDGLP), 1202–1228 (PKSGLSQQRGYQHHTQNNPQAPQQNLD), and 1335–1364 (SNQTTSGQNGNTTDGTRSFLSTTQNGGEQQ). Residues 637 to 653 (HGPEAHVTKKQRGDIHP) show a composition bias toward basic and acidic residues. Positions 663-676 (SHSQSRSPGQQTQG) are enriched in polar residues. The span at 678–704 (HGEHKDLSNTTSKHEECLQVRSVKTEK) shows a compositional bias: basic and acidic residues. The segment covering 705–731 (PMSSQPSPGGKSSCSRQQSPISNYTNS) has biased composition (polar residues). Residues 1335–1350 (SNQTTSGQNGNTTDGT) are compositionally biased toward low complexity. The segment covering 1352-1364 (SFLSTTQNGGEQQ) has biased composition (polar residues).

Belongs to the GLI C2H2-type zinc-finger protein family. Phosphorylation is essential for its proteolytic processing. In terms of processing, the repressor form (GLI3R), a C-terminally truncated form is generated from the full-length GLI3 protein (GLI3FL) through proteolytic processing.

Its subcellular location is the nucleus. It is found in the cytoplasm. Its function is as follows. Has a dual function as a transcriptional activator and a repressor of the sonic hedgehog (Shh) pathway, and may play a role in limb development. May bind to the minimal GLI-consensus sequence 5'-GGGTGGTC-3'. Has an essential role in the early embryonic patterning of mesoderm and neuroectoderm. This Xenopus laevis (African clawed frog) protein is Zinc finger protein GLI3 (gli3).